Consider the following 361-residue polypeptide: Phospho-N-acetylmuramoyl-pentapeptide-transferase (361 aa).

The next 10 membrane-spanning stretches (helical) occupy residues 25 to 45 (TGGA…WIID), 71 to 91 (TPTM…VLWA), 94 to 114 (LNPY…VGFY), 133 to 153 (WRLL…VRLG), 169 to 189 (VAIN…VGAG), 200 to 220 (GLAI…SYLA), 240 to 260 (LSVL…FNAP), 264 to 284 (IFMG…IAVA), 289 to 309 (IVLA…IVQV), and 338 to 358 (QIVI…LSTL).

This sequence belongs to the glycosyltransferase 4 family. MraY subfamily. Mg(2+) is required as a cofactor.

The protein resides in the cell inner membrane. It carries out the reaction UDP-N-acetyl-alpha-D-muramoyl-L-alanyl-gamma-D-glutamyl-meso-2,6-diaminopimeloyl-D-alanyl-D-alanine + di-trans,octa-cis-undecaprenyl phosphate = di-trans,octa-cis-undecaprenyl diphospho-N-acetyl-alpha-D-muramoyl-L-alanyl-D-glutamyl-meso-2,6-diaminopimeloyl-D-alanyl-D-alanine + UMP. It functions in the pathway cell wall biogenesis; peptidoglycan biosynthesis. Its function is as follows. Catalyzes the initial step of the lipid cycle reactions in the biosynthesis of the cell wall peptidoglycan: transfers peptidoglycan precursor phospho-MurNAc-pentapeptide from UDP-MurNAc-pentapeptide onto the lipid carrier undecaprenyl phosphate, yielding undecaprenyl-pyrophosphoryl-MurNAc-pentapeptide, known as lipid I. The polypeptide is Phospho-N-acetylmuramoyl-pentapeptide-transferase (Rhodopseudomonas palustris (strain BisB18)).